The chain runs to 447 residues: Transcription factor azf1 (447 aa).

Disordered stretches follow at residues 125 to 155 (HNGASQQPPGAQSSSNEEGAQGKSSSSNEVE) and 174 to 199 (QSPGVQSLPPLQQLTHGGSNGYPQSY). Residues 127–139 (GASQQPPGAQSSS) show a composition bias toward low complexity. Residues 140–155 (NEEGAQGKSSSSNEVE) show a composition bias toward polar residues. 4 C2H2-type zinc fingers span residues 225–249 (YACTLPQCGKSFAQKTHLDIHMRAH), 255–279 (FVCKEPSCGQRFSQLGNLKTHQRRH), 285–307 (FSCDICQKRFAQRGNVRAHKITH), and 313–338 (FTCLLDDCGKQFTQLGNLKSHQNKFH). The segment at 377-447 (NKGIKGRGKD…EPYFIERQAH (71 aa)) is disordered. The segment covering 397–416 (PGSESRRRIEPLSSTDDKMR) has biased composition (basic and acidic residues). Residues 421-431 (GDTSMYNGGSS) are compositionally biased toward polar residues.

The protein localises to the nucleus. Functionally, transcription factor that acts as a positive regulator of ochratoxin A (OTA) biosynthesis via controlling the expression of antioxidant genes and oxidative phosphorylation genes. This is Transcription factor azf1 from Aspergillus niger (strain ATCC MYA-4892 / CBS 513.88 / FGSC A1513).